The chain runs to 104 residues: Turripeptide OL55-like (104 aa).

In terms of processing, contains 8 disulfide bonds. Expressed by the venom duct.

Its subcellular location is the secreted. Functionally, acts as a neurotoxin by inhibiting an ion channel. This Iotyrris cingulifera (Sea snail) protein is Turripeptide OL55-like.